The following is a 72-amino-acid chain: Protein SlyX homolog (72 aa).

The disordered stretch occupies residues K53–Y72.

This sequence belongs to the SlyX family.

The polypeptide is Protein SlyX homolog (Marinobacter nauticus (strain ATCC 700491 / DSM 11845 / VT8) (Marinobacter aquaeolei)).